The primary structure comprises 570 residues: Arginine--tRNA ligase (570 aa).

A 'HIGH' region motif is present at residues 127–137 (ANPTGPLHLGH).

It belongs to the class-I aminoacyl-tRNA synthetase family. As to quaternary structure, monomer.

It localises to the cytoplasm. It catalyses the reaction tRNA(Arg) + L-arginine + ATP = L-arginyl-tRNA(Arg) + AMP + diphosphate. The polypeptide is Arginine--tRNA ligase (Neorickettsia sennetsu (strain ATCC VR-367 / Miyayama) (Ehrlichia sennetsu)).